A 912-amino-acid polypeptide reads, in one-letter code: DNA ligase 4 (912 aa).

ATP is bound by residues Glu-271, Thr-272, Lys-273, Leu-274, Arg-278, Glu-331, Lys-345, Phe-367, Glu-427, Lys-432, Lys-449, and Lys-451. Lys-273 (N6-AMP-lysine intermediate) is an active-site residue. Glu-331 lines the Mg(2+) pocket. Glu-427 lines the Mg(2+) pocket. The interval Leu-610–Asp-620 is required for catalytic activity. BRCT domains lie at Lys-654–Met-743 and Leu-846–Leu-912.

Belongs to the ATP-dependent DNA ligase family. As to quaternary structure, interacts with XRCC4; the LIG4-XRCC4 subcomplex has a 1:2 stoichiometry and XRCC4 is required for LIG4 stability. Component of the core long-range non-homologous end joining (NHEJ) complex (also named DNA-PK complex) composed of PRKDC, LIG4, XRCC4, XRCC6/Ku70, XRCC5/Ku86 and NHEJ1/XLF. Additional component of the NHEJ complex includes PAXX. Following autophosphorylation, PRKDC dissociates from DNA, leading to formation of the short-range NHEJ complex, composed of LIG4, XRCC4, XRCC6/Ku70, XRCC5/Ku86 and NHEJ1/XLF. Interacts with DCLRE1C; the interaction is direct. Interacts with APLF. It depends on Mg(2+) as a cofactor.

The protein localises to the nucleus. It catalyses the reaction ATP + (deoxyribonucleotide)n-3'-hydroxyl + 5'-phospho-(deoxyribonucleotide)m = (deoxyribonucleotide)n+m + AMP + diphosphate.. Functionally, DNA ligase involved in DNA non-homologous end joining (NHEJ); required for double-strand break (DSB) repair and V(D)J recombination. Catalyzes the NHEJ ligation step of the broken DNA during DSB repair by resealing the DNA breaks after the gap filling is completed. Joins single-strand breaks in a double-stranded polydeoxynucleotide in an ATP-dependent reaction. LIG4 is mechanistically flexible: it can ligate nicks as well as compatible DNA overhangs alone, while in the presence of XRCC4, it can ligate ends with 2-nucleotides (nt) microhomology and 1-nt gaps. Forms a subcomplex with XRCC4; the LIG4-XRCC4 subcomplex is responsible for the NHEJ ligation step and XRCC4 enhances the joining activity of LIG4. Binding of the LIG4-XRCC4 complex to DNA ends is dependent on the assembly of the DNA-dependent protein kinase complex DNA-PK to these DNA ends. LIG4 regulates nuclear localization of XRCC4. The polypeptide is DNA ligase 4 (Cricetulus griseus (Chinese hamster)).